Here is a 322-residue protein sequence, read N- to C-terminus: Glycerol-3-phosphate dehydrogenase [NAD(P)+] (322 aa).

NADPH contacts are provided by Trp-11, Arg-31, Arg-32, and Lys-101. Residues Lys-101 and Gly-130 each contribute to the sn-glycerol 3-phosphate site. Ala-134 serves as a coordination point for NADPH. Sn-glycerol 3-phosphate is bound by residues Lys-184, Asp-237, Ser-247, Arg-248, and Asn-249. Lys-184 (proton acceptor) is an active-site residue. NADPH is bound at residue Arg-248. NADPH contacts are provided by Val-270 and Glu-272.

Belongs to the NAD-dependent glycerol-3-phosphate dehydrogenase family.

The protein localises to the cytoplasm. The enzyme catalyses sn-glycerol 3-phosphate + NAD(+) = dihydroxyacetone phosphate + NADH + H(+). It catalyses the reaction sn-glycerol 3-phosphate + NADP(+) = dihydroxyacetone phosphate + NADPH + H(+). Its pathway is membrane lipid metabolism; glycerophospholipid metabolism. Its function is as follows. Catalyzes the reduction of the glycolytic intermediate dihydroxyacetone phosphate (DHAP) to sn-glycerol 3-phosphate (G3P), the key precursor for phospholipid synthesis. The sequence is that of Glycerol-3-phosphate dehydrogenase [NAD(P)+] from Thermus thermophilus (strain ATCC BAA-163 / DSM 7039 / HB27).